Here is a 31-residue protein sequence, read N- to C-terminus: Conotoxin Cltx-2 (31 aa).

4-hydroxyproline occurs at positions 6 and 31.

Post-translationally, contains 4 disulfide bonds. Expressed by the venom duct.

It localises to the secreted. In Californiconus californicus (California cone), this protein is Conotoxin Cltx-2.